The chain runs to 365 residues: Myocyte-specific enhancer factor 2B (365 aa).

The 55-residue stretch at 3-57 folds into the MADS-box domain; the sequence is RKKIQISRILDQRNRQVTFTKRKFGLMKKAYELSVLCDCEIALIIFNSANRLFQY. The segment at residues 58–86 is a DNA-binding region (mef2-type); that stretch reads ASTDMDRVLLKYTEYSEPHESRTNTDILE. 3 disordered regions span residues 94–124, 142–309, and 321–365; these read GLDG…GDPA, VVYG…SPGP, and AGCP…KTQQ. Over residues 98–108 the composition is skewed to acidic residues; that stretch reads PELEPDEGPEE. Over residues 223-240 the composition is skewed to polar residues; that stretch reads NTSRSLYSGLQNPCSTAT. 2 stretches are compositionally biased toward low complexity: residues 277–289 and 326–346; these read PQSA…SLRP and PTAG…SPGT. Over residues 354-365 the composition is skewed to polar residues; it reads TSLQASSEKTQQ.

The protein belongs to the MEF2 family. Interacts with HDAC7. Heterodimer. Interacts with HDAC9. In terms of tissue distribution, expressed in skeletal and cardiac muscle and brain.

The protein resides in the nucleus. In terms of biological role, transcriptional activator which binds specifically to the MEF2 element, 5'-YTA[AT](4)TAR-3', found in numerous muscle-specific genes. Activates transcription via this element. May be involved in muscle-specific and/or growth factor-related transcription. In Homo sapiens (Human), this protein is Myocyte-specific enhancer factor 2B (MEF2B).